Consider the following 223-residue polypeptide: Deoxyribose-phosphate aldolase 2 (223 aa).

Aspartate 92 serves as the catalytic Proton donor/acceptor. The active-site Schiff-base intermediate with acetaldehyde is the lysine 154. Lysine 183 (proton donor/acceptor) is an active-site residue.

Belongs to the DeoC/FbaB aldolase family. DeoC type 1 subfamily.

It localises to the cytoplasm. It catalyses the reaction 2-deoxy-D-ribose 5-phosphate = D-glyceraldehyde 3-phosphate + acetaldehyde. Its pathway is carbohydrate degradation; 2-deoxy-D-ribose 1-phosphate degradation; D-glyceraldehyde 3-phosphate and acetaldehyde from 2-deoxy-alpha-D-ribose 1-phosphate: step 2/2. Functionally, catalyzes a reversible aldol reaction between acetaldehyde and D-glyceraldehyde 3-phosphate to generate 2-deoxy-D-ribose 5-phosphate. This chain is Deoxyribose-phosphate aldolase 2, found in Oceanobacillus iheyensis (strain DSM 14371 / CIP 107618 / JCM 11309 / KCTC 3954 / HTE831).